Consider the following 359-residue polypeptide: Cysteine/Cysteine sulfinic acid decarboxylase (359 aa).

This sequence in the N-terminal section; belongs to the HFCD (homo-oligomeric flavin containing Cys decarboxylase) superfamily. It in the C-terminal section; belongs to the PPC synthetase family.

It catalyses the reaction L-cysteine + H(+) = cysteamine + CO2. It carries out the reaction 3-sulfino-L-alanine + H(+) = hypotaurine + CO2. With respect to regulation, slightly stimulated in the presence of 1 mM Mg(2+). Its function is as follows. Catalyzes the decarboxylation of L-cysteine to cysteamine and of 3-sulfino-L-alanine (cysteine sulfinic acid) to hypotaurine. Also catalyzes the decarboxylation of various amino acids such as L-lysine, L-glutamate, L-asparaginate and L-proline. In vitro, shows highest activity with L-cysteine as substrate. The chain is Cysteine/Cysteine sulfinic acid decarboxylase from Unknown prokaryotic organism.